A 304-amino-acid chain; its full sequence is 1D-myo-inositol 2-acetamido-2-deoxy-alpha-D-glucopyranoside deacetylase 2 (304 aa).

Zn(2+)-binding residues include histidine 17, aspartate 20, and histidine 152.

This sequence belongs to the MshB deacetylase family. Zn(2+) serves as cofactor.

It catalyses the reaction 1D-myo-inositol 2-acetamido-2-deoxy-alpha-D-glucopyranoside + H2O = 1D-myo-inositol 2-amino-2-deoxy-alpha-D-glucopyranoside + acetate. Its function is as follows. Catalyzes the deacetylation of 1D-myo-inositol 2-acetamido-2-deoxy-alpha-D-glucopyranoside (GlcNAc-Ins) in the mycothiol biosynthesis pathway. The chain is 1D-myo-inositol 2-acetamido-2-deoxy-alpha-D-glucopyranoside deacetylase 2 from Catenulispora acidiphila (strain DSM 44928 / JCM 14897 / NBRC 102108 / NRRL B-24433 / ID139908).